The primary structure comprises 200 residues: MLDYEIFNPYEGLIFDMDGTLIDTMPVHAQAWTMVGKKFGYEFDFQIMYNFGGATVRTIAGEMMKAANMPLDRIEDVLAAKRELSYQLIPTQSKLLPTFEIVKSFHQKKPIALGSGSHRKIIDMLMDKLAIAPYFNAIVSADDVKEHKPHPETFLRCAELIQANPSRCIVFEDADLGVQAGLSAGMDVFDVRTREIISPR.

This sequence belongs to the HAD-like hydrolase superfamily. CbbY/CbbZ/Gph/YieH family.

This is an uncharacterized protein from Haemophilus influenzae (strain ATCC 51907 / DSM 11121 / KW20 / Rd).